Reading from the N-terminus, the 146-residue chain is Hemoglobin subunit beta-1/2 (146 aa).

Position 1 is an N-acetylvaline (V1). The Globin domain occupies 2 to 146; sequence HLTPDEKNAV…VATALAHKYH (145 aa). Residue S44 is modified to Phosphoserine. At K59 the chain carries N6-acetyllysine. Heme b is bound by residues H63 and H92. C93 carries the S-nitrosocysteine modification. N6-acetyllysine is present on K144.

It belongs to the globin family. As to quaternary structure, heterotetramer of two alpha chains and two beta chains. As to expression, red blood cells.

Functionally, involved in oxygen transport from the lung to the various peripheral tissues. The protein is Hemoglobin subunit beta-1/2 (HBB) of Otolemur crassicaudatus (Brown greater galago).